The following is a 158-amino-acid chain: Serglycin (158 aa).

A signal peptide spans 1–27 (MMQKLLKCSRLVLALALILVLESSVQG). A disulfide bridge links cysteine 40 with cysteine 49. O-linked (Xyl...) (glycosaminoglycan) serine glycosylation is found at serine 94 and serine 96. 9 tandem repeats follow at residues 94-95 (SG), 96-97 (SG), 98-99 (FG), 100-101 (SG), 102-103 (SG), 104-105 (SG), 106-107 (SG), 108-109 (SG), and 110-111 (SG). Positions 94-111 (SGSGFGSGSGSGSGSGSG) are 9 X 2 AA tandem repeats of [SF]-G. Residues serine 100, serine 102, serine 104, serine 106, serine 108, and serine 110 are each glycosylated (O-linked (Xyl...) (glycosaminoglycan) serine). Residues 134–158 (RSLDRNLPSDSQDLGQHGLEEDFML) are disordered.

The protein belongs to the serglycin family. Binds to activated CD44 and to GZMB. In terms of processing, O-glycosylated; contains chondroitin sulfate and heparan sulfate.

The protein resides in the cytoplasmic granule. Its subcellular location is the cytolytic granule. The protein localises to the secreted. It localises to the extracellular space. It is found in the golgi apparatus. Its function is as follows. Plays a role in formation of mast cell secretory granules and mediates storage of various compounds in secretory vesicles. Required for storage of some proteases in both connective tissue and mucosal mast cells and for storage of granzyme B in T-lymphocytes. Plays a role in localizing neutrophil elastase in azurophil granules of neutrophils. Mediates processing of MMP2. Plays a role in cytotoxic cell granule-mediated apoptosis by forming a complex with granzyme B which is delivered to cells by perforin to induce apoptosis. Regulates the secretion of TNF-alpha and may also regulate protease secretion. Inhibits bone mineralization. The protein is Serglycin (SRGN) of Homo sapiens (Human).